Here is a 515-residue protein sequence, read N- to C-terminus: Bifunctional solanapyrone synthase (515 aa).

An N-terminal signal peptide occupies residues 1 to 25 (MRLIILNLLSLGITPSVVGHSGPHR). Residue asparagine 66 is glycosylated (N-linked (GlcNAc...) asparagine). Positions 91 to 261 (APKNPACIYT…THIVQRTYPL (171 aa)) constitute an FAD-binding PCMH-type domain. Pros-8alpha-FAD histidine is present on histidine 128. N-linked (GlcNAc...) asparagine glycosylation is found at asparagine 274 and asparagine 355.

It belongs to the oxygen-dependent FAD-linked oxidoreductase family. The cofactor is FAD.

The enzyme catalyses prosolanapyrone II + O2 = prosolanapyrone III + H2O2. It carries out the reaction prosolanapyrone III = (-)-solanapyrone A. It catalyses the reaction prosolanapyrone III = solanapyrone D. Its pathway is phytotoxin biosynthesis. Its function is as follows. Bifunctional solanapyrone synthase; part of the gene cluster that mediates the biosynthesis of the phytotoxin solanapyrone, a causal agent of early blight disease of potato and tomato. The prosolanapyrone synthase sol1 is a polyketide synthase that produces the octaketide desmethylprosolanapyrone I via sequential condensations of 7 malonyl-CoA units with one acetyl-CoA unit, and one methylation step. The octaketide backbone is further methylated by the sol2 O-methyltransferase to yield prosolanapyrone I. Prosolanapyrone I is hydroxylated to prosolanapyrone II by the cytochrome P450 monooxygenase sol6. The solanapyrone synthase sol5 then catalyzes the oxidation of prosolanapyrone II and the subsequent Diels Alder cycloisomerization of the product prosolanapyrone III to solanapyrones A and D. Solanapyrones A and D are then converted into solanapyrones B and E, respectively, by the sol3 dehydrogenase. The polypeptide is Bifunctional solanapyrone synthase (sol5) (Alternaria solani).